The sequence spans 76 residues: uncharacterized protein (76 aa).

An N-terminal signal peptide occupies residues 1 to 15 (MYLPLLLFCVISCYG).

This is an uncharacterized protein from Magallana gigas (Pacific oyster).